A 162-amino-acid polypeptide reads, in one-letter code: Transcription elongation factor GreB (162 aa).

A coiled-coil region spans residues 52 to 73 (KKLLREIDRRVRYLRKRLEDVK).

This sequence belongs to the GreA/GreB family. GreB subfamily.

Functionally, necessary for efficient RNA polymerase transcription elongation past template-encoded arresting sites. The arresting sites in DNA have the property of trapping a certain fraction of elongating RNA polymerases that pass through, resulting in locked ternary complexes. Cleavage of the nascent transcript by cleavage factors such as GreA or GreB allows the resumption of elongation from the new 3'terminus. GreB releases sequences of up to 9 nucleotides in length. This chain is Transcription elongation factor GreB, found in Pseudomonas putida (strain ATCC 47054 / DSM 6125 / CFBP 8728 / NCIMB 11950 / KT2440).